The chain runs to 333 residues: MNRLLSSAVNLLLVLVLGVGLSGCVSTRVPTASSSPWKAIDLETQANPLDVSFTDPSHGFLVGSNRMIRETDDGGAHWNDRSLDLPDEENFRLISIDFEGQEGWIAGQPGLLMHSTDGGQNWTRLFLDTKLPGEPYLITALGKSSAELATNVGAVYKTNDGGESWEASVTDAAGAVRDLRRSSNGSYVSVSGLGNFYATWEPGETVWKVHQRVSSQRLQSIGYQPDGNLWMVARGAQIRLNDGDGNVEDWSKAIIPITNGYGYMDMAWDDDGGIWAGGGNGTLLVSHDGGDSWETDPVGDQQPSNFTRFVFDDDHAFVLGERGNLLRWVGNAV.

An N-terminal signal peptide occupies residues 1 to 23 (MNRLLSSAVNLLLVLVLGVGLSG). Cysteine 24 carries the N-palmitoyl cysteine lipid modification. The S-diacylglycerol cysteine moiety is linked to residue cysteine 24.

This sequence belongs to the Ycf48 family. In terms of assembly, part of early PSII assembly complexes which includes D1 (psbA) and PsbI; not found in mature PSII. Binds to the lumenal side of PSII complexes. Interacts with YidC.

Its subcellular location is the cellular thylakoid membrane. A factor required for optimal assembly of photosystem II (PSII), acting in the early stages of PSII assembly. Also plays a role in replacement of photodamaged D1 (psbA). Assists YidC in synthesis of chlorophyll-binding proteins. The polypeptide is Photosystem II assembly lipoprotein Ycf48 (Synechococcus sp. (strain CC9902)).